Reading from the N-terminus, the 206-residue chain is MESQAATPSSLSGESCTLDLPAVCDTSSYEASQRVSQGSSNSLSSLESHPFLSSSTTDPDSNSLNTEQKGSWDSENFWLDPSSKGQLETNEEEDGLRKSLDRFYEAFAHPLPGSGDPLSASVCQCLSQTISELEGQESQRYALRSFQMAQVIFSRDGCSILQRHSRDTRFYPLEQEGSSVDDEEPTPGLSREVIRFLLEQTVMKDS.

The segment at Ser-27–Asp-94 is disordered. Low complexity predominate over residues Ser-32–Ser-55. The span at Thr-56–Ser-74 shows a compositional bias: polar residues.

As to quaternary structure, component of the shieldin complex, consisting of SHLD1, SHLD2, SHLD3 and MAD2L2/REV7. Within the complex, SHLD2 forms a scaffold which interacts with a SHLD3-MAD2L2 subcomplex via its N-terminus, and with SHLD1 via its C-terminus. Interacts with ASTE1.

It localises to the chromosome. Functionally, component of the shieldin complex, which plays an important role in repair of DNA double-stranded breaks (DSBs). During G1 and S phase of the cell cycle, the complex functions downstream of TP53BP1 to promote non-homologous end joining (NHEJ) and suppress DNA end resection. Mediates various NHEJ-dependent processes including immunoglobulin class-switch recombination, and fusion of unprotected telomeres. The chain is Shieldin complex subunit 1 from Mus musculus (Mouse).